Here is a 190-residue protein sequence, read N- to C-terminus: dTTP/UTP pyrophosphatase (190 aa).

The Proton acceptor role is filled by aspartate 68.

Belongs to the Maf family. YhdE subfamily. It depends on a divalent metal cation as a cofactor.

It is found in the cytoplasm. The catalysed reaction is dTTP + H2O = dTMP + diphosphate + H(+). It carries out the reaction UTP + H2O = UMP + diphosphate + H(+). Functionally, nucleoside triphosphate pyrophosphatase that hydrolyzes dTTP and UTP. May have a dual role in cell division arrest and in preventing the incorporation of modified nucleotides into cellular nucleic acids. In Pyrococcus furiosus (strain ATCC 43587 / DSM 3638 / JCM 8422 / Vc1), this protein is dTTP/UTP pyrophosphatase.